Consider the following 551-residue polypeptide: Cytochrome P450 monooxygenase abl5 (551 aa).

An N-linked (GlcNAc...) asparagine glycan is attached at Asn24. A helical transmembrane segment spans residues 37-57 (VVLNTLTAIVVVWICYRAVIY). 5 N-linked (GlcNAc...) asparagine glycosylation sites follow: Asn174, Asn218, Asn283, Asn307, and Asn441. Cys495 contacts heme.

Belongs to the cytochrome P450 family. It depends on heme as a cofactor.

It is found in the membrane. Functionally, cytochrome P450 monooxygenase; part of the gene cluster that mediates the biosynthesis of abscisic acid (ABA), a phytohormone that acts antagonistically toward salicylic acid (SA), jasmonic acid (JA) and ethylene (ETH) signaling, to impede plant defense responses. The first step of the pathway catalyzes the reaction from farnesyl diphosphate to alpha-ionylideneethane performed by the alpha-ionylideneethane synthase abl3 via a three-step reaction mechanism involving 2 neutral intermediates, beta-farnesene and allofarnesene. The cytochrome P450 monooxygenase abl1 might then be involved in the conversion of alpha-ionylideneethane to alpha-ionylideneacetic acid. Alpha-ionylideneacetic acid is further converted to abscisic acid in 2 steps involving the cytochrome P450 monooxygenase abl2 and the short-chain dehydrogenase/reductase abl4, via the intermediates 1'-deoxy-ABA or 1',4'-trans-diol-ABA, depending on the order of action of these 2 enzymes. Abl2 is responsible for the hydroxylation of carbon atom C-1' and abl4 might be involved in the oxidation of the C-4' carbon atom. The cytochrome monooxygenase abl5 seems not essential for the biosynthesis of ABA and its function remains to be identified. The sequence is that of Cytochrome P450 monooxygenase abl5 from Leptosphaeria maculans (strain JN3 / isolate v23.1.3 / race Av1-4-5-6-7-8) (Blackleg fungus).